The chain runs to 140 residues: Large-conductance mechanosensitive channel (140 aa).

2 consecutive transmembrane segments (helical) span residues 14 to 34 (VMDL…TGSL) and 85 to 105 (GAFV…FLLV).

This sequence belongs to the MscL family. As to quaternary structure, homopentamer.

It is found in the cell inner membrane. Its function is as follows. Channel that opens in response to stretch forces in the membrane lipid bilayer. May participate in the regulation of osmotic pressure changes within the cell. This is Large-conductance mechanosensitive channel from Sphingopyxis alaskensis (strain DSM 13593 / LMG 18877 / RB2256) (Sphingomonas alaskensis).